Here is a 177-residue protein sequence, read N- to C-terminus: Large ribosomal subunit protein uL6 (177 aa).

It belongs to the universal ribosomal protein uL6 family. Part of the 50S ribosomal subunit.

In terms of biological role, this protein binds to the 23S rRNA, and is important in its secondary structure. It is located near the subunit interface in the base of the L7/L12 stalk, and near the tRNA binding site of the peptidyltransferase center. The chain is Large ribosomal subunit protein uL6 from Latilactobacillus sakei subsp. sakei (strain 23K) (Lactobacillus sakei subsp. sakei).